The primary structure comprises 361 residues: Probable pectinesterase 50 (361 aa).

The N-terminal stretch at 1 to 22 (MGYISMSVVAFLVVFASPVVLA) is a signal peptide. Q174 serves as a coordination point for substrate. The active-site Proton donor is D197. D218 acts as the Nucleophile in catalysis. Residues R275 and W277 each coordinate substrate.

This sequence belongs to the pectinesterase family. Expressed in flower buds.

The protein localises to the secreted. Its subcellular location is the cell wall. It carries out the reaction [(1-&gt;4)-alpha-D-galacturonosyl methyl ester](n) + n H2O = [(1-&gt;4)-alpha-D-galacturonosyl](n) + n methanol + n H(+). The protein operates within glycan metabolism; pectin degradation; 2-dehydro-3-deoxy-D-gluconate from pectin: step 1/5. In terms of biological role, acts in the modification of cell walls via demethylesterification of cell wall pectin. The polypeptide is Probable pectinesterase 50 (PME50) (Arabidopsis thaliana (Mouse-ear cress)).